Consider the following 204-residue polypeptide: Photosystem I reaction center subunit II-2, chloroplastic (204 aa).

The N-terminal 44 residues, 1-44 (MATQAAGIFSPAITTTTSAVKKLHLFSSSHRPKSLSFTKTAIRA), are a transit peptide targeting the chloroplast. Thr-47 is modified (phosphothreonine). The tract at residues 47–71 (TESSSAAPAVKEAPVGFTPPQLDPN) is disordered. The ferredoxin and ferredoxin-oxidoreductase binding stretch occupies residues 137-145 (RLRSKYKIT).

Belongs to the PsaD family. As to quaternary structure, interacts with CURT1C.

Its subcellular location is the plastid. The protein resides in the chloroplast thylakoid membrane. Functionally, PSAD can form complexes with ferredoxin and ferredoxin-oxidoreductase in photosystem I (PS I) reaction center. PSAD may encode the ferredoxin-docking protein. The chain is Photosystem I reaction center subunit II-2, chloroplastic (PSAD2) from Arabidopsis thaliana (Mouse-ear cress).